The following is a 358-amino-acid chain: MIGKIKKFNFKSLFILNTFALIVTSYLFNNFIFTGVYILFFFISIFITKNGLKIIKKFNFLQNIRDEGPTNHFKKSDTPTMGGIFMIIPFLILLLIITINLSSLKLILLLLTVFGFFITGFLDDYLSIKKRENTGLKTKEKFILQSVISIIFILLAYEKNLISPLITISDSWAINMNIFILPVAFLVLVGISNSVNLTDGLDGLAAGCSGIVFYGLGTEILLKGQQELFVFSILCFSMSGICLGFLKYNSYPAKIFMGDTGSLSIGAILGSIALLTNSIFTLSIFSGIFIIESLSVIIQVGFFKITKKLFHRGKRIFLMAPLHHHFELKGVKEEKIVENFWKINILLVILGIVLKINL.

10 consecutive transmembrane segments (helical) span residues 13 to 47, 81 to 101, 106 to 126, 148 to 168, 171 to 191, 201 to 221, 228 to 248, 255 to 275, 278 to 298, and 336 to 356; these read LFILNTFALIVTSYLFNNFIFTGVYILFFFISIFI, MGGIFMIIPFLILLLIITINL, LILLLLTVFGFFITGFLDDYL, ISIIFILLAYEKNLISPLITI, SWAINMNIFILPVAFLVLVGI, LDGLAAGCSGIVFYGLGTEIL, LFVFSILCFSMSGICLGFLKY, IFMGDTGSLSIGAILGSIALL, SIFTLSIFSGIFIIESLSVII, and IVENFWKINILLVILGIVLKI.

Belongs to the glycosyltransferase 4 family. MraY subfamily. It depends on Mg(2+) as a cofactor.

It is found in the cell inner membrane. The catalysed reaction is UDP-N-acetyl-alpha-D-muramoyl-L-alanyl-gamma-D-glutamyl-meso-2,6-diaminopimeloyl-D-alanyl-D-alanine + di-trans,octa-cis-undecaprenyl phosphate = di-trans,octa-cis-undecaprenyl diphospho-N-acetyl-alpha-D-muramoyl-L-alanyl-D-glutamyl-meso-2,6-diaminopimeloyl-D-alanyl-D-alanine + UMP. Its pathway is cell wall biogenesis; peptidoglycan biosynthesis. Its function is as follows. Catalyzes the initial step of the lipid cycle reactions in the biosynthesis of the cell wall peptidoglycan: transfers peptidoglycan precursor phospho-MurNAc-pentapeptide from UDP-MurNAc-pentapeptide onto the lipid carrier undecaprenyl phosphate, yielding undecaprenyl-pyrophosphoryl-MurNAc-pentapeptide, known as lipid I. In Prochlorococcus marinus (strain MIT 9301), this protein is Phospho-N-acetylmuramoyl-pentapeptide-transferase.